The following is a 755-amino-acid chain: Sentrin-specific protease 5 (755 aa).

The interval 269-329 (QKVTGDHQET…NSHVPDGHTK (61 aa)) is disordered. Residues 272-283 (TGDHQETLRENG) show a composition bias toward basic and acidic residues. Positions 563 to 724 (FYNKHMLDMD…VFVLQYCKCL (162 aa)) are protease. Active-site residues include His646, Asp663, and Cys713.

The protein belongs to the peptidase C48 family. In terms of assembly, interacts with CCAR2.

It localises to the nucleus. The protein localises to the nucleolus. Protease that catalyzes two essential functions in the SUMO pathway: processing of full-length SUMO3 to its mature form and deconjugation of SUMO2 and SUMO3 from targeted proteins. Has weak proteolytic activity against full-length SUMO1 or SUMO1 conjugates. Required for cell division. This chain is Sentrin-specific protease 5 (SENP5), found in Macaca fascicularis (Crab-eating macaque).